A 553-amino-acid polypeptide reads, in one-letter code: Putative ABC transporter ATP-binding protein BCE_3323 (553 aa).

ABC transporter domains follow at residues 7-245 and 295-527; these read AEIN…FRPF and LSAE…SINR. Residues 41 to 48 and 329 to 336 contribute to the ATP site; these read GGSGSGKT and GKNGTGKS.

Belongs to the ABC transporter superfamily.

The protein resides in the cell membrane. Functionally, probably part of an ABC transporter complex. Responsible for energy coupling to the transport system. The polypeptide is Putative ABC transporter ATP-binding protein BCE_3323 (Bacillus cereus (strain ATCC 10987 / NRS 248)).